The following is a 1018-amino-acid chain: Transmembrane protein 132A (1018 aa).

A signal peptide spans 1–32 (MTERKAAAPRGPYGAWFCLLVALALEVVRVSS). Residues 33–846 (NHDTLDPIYL…VTDLELGMYA (814 aa)) lie on the Extracellular side of the membrane. Residue Asn-276 is glycosylated (N-linked (GlcNAc...) asparagine). Positions 606-911 (IEVRSPLSDA…QLDRCSSSGP (306 aa)) are binds to HSPA5/GRP78. Residues 666 to 1018 (LPAPKQEVAL…NYMERIRGSS (353 aa)) are confers cellular localization similar to full-length form. A compositionally biased stretch (basic and acidic residues) spans 807 to 818 (ERAEEEAGKEEN). The tract at residues 807–833 (ERAEEEAGKEENEAKEEEEDEEEMVPA) is disordered. The span at 819-830 (EAKEEEEDEEEM) shows a compositional bias: acidic residues. A helical transmembrane segment spans residues 847–867 (LLGIFCLAILIFLVNGVVFVL). The Cytoplasmic segment spans residues 868 to 1018 (RYQRKEPPDS…NYMERIRGSS (151 aa)). Positions 900 to 956 (SRQLDRCSSSGPPKGEGGCPCESGAGGDASTVAPSASESPAGSSSTLARKEAGGRRK) are disordered. Low complexity-rich tracts occupy residues 906–922 (CSSS…PCES) and 932–944 (APSA…GSSS).

This sequence belongs to the TMEM132 family. As to quaternary structure, interacts with HSPA5/GRP78.

The protein resides in the golgi apparatus membrane. It is found in the endoplasmic reticulum membrane. In terms of biological role, may play a role in embryonic and postnatal development of the brain. Increased resistance to cell death induced by serum starvation in cultured cells. Regulates cAMP-induced GFAP gene expression via STAT3 phosphorylation. This is Transmembrane protein 132A (Tmem132a) from Mus musculus (Mouse).